The primary structure comprises 555 residues: Inorganic phosphate transporter 1-11 (555 aa).

Residues 1 to 28 (MADADGGSNLAVLDALDSARTQMYHMKA) lie on the Cytoplasmic side of the membrane. Residues 29 to 49 (IVIAGMGFFTDAYDLFCISTV) traverse the membrane as a helical segment. Residues 50-77 (SKLLGRLYYQPDGSTDSKPGALSKTANN) are Extracellular-facing. The chain crosses the membrane as a helical span at residues 78–98 (MVIGVALVGTLMGQLVFGYFG). Residues 99-105 (DKLGRKR) are Cytoplasmic-facing. A helical membrane pass occupies residues 106-126 (VYGVTLILMAACAIGSGLSFG). Residues 127 to 130 (SSRK) lie on the Extracellular side of the membrane. A helical membrane pass occupies residues 131 to 151 (AVIGTLCFFRFWLGFGIGGDY). The Cytoplasmic segment spans residues 152–167 (PLSATIMSEYSNKKTR). Residues 168–188 (GAFIAAVFAMQGVGIIFAGLV) traverse the membrane as a helical segment. The Extracellular segment spans residues 189–216 (SMIVSSIFLTYNKAPSYKGNHDLSRQMP). The chain crosses the membrane as a helical span at residues 217–237 (AADYVWRIVLMIGAFPALATF). At 238 to 298 (YWRMKMPETA…PLLSMEFARR (61 aa)) the chain is on the cytoplasmic side. Residues 299-319 (HGLHLIGTTTTWFLLDIAFYS) traverse the membrane as a helical segment. Residues 320–351 (QNLTQKDIFPAMGLISGAAEVNALTEMFQISK) are Extracellular-facing. A helical transmembrane segment spans residues 352 to 372 (ASFLVALLGTFPGYWVTVALI). The Cytoplasmic portion of the chain corresponds to 373–377 (DKMGR). Residues 378–398 (YMIQLIGFFMMSMFMLAMGIL) form a helical membrane-spanning segment. At 399-408 (YDYLKTHHFL) the chain is on the extracellular side. The chain crosses the membrane as a helical span at residues 409–436 (FGLLYALTFFFANFGPNSTTFVLPAELF). Residues 437–442 (PTRVRS) are Cytoplasmic-facing. A helical transmembrane segment spans residues 443 to 463 (TCHAISAAAGKAGAIVAAFGI). Residues 464 to 477 (QKLTYNSQVKSIKK) lie on the Extracellular side of the membrane. Residues 478-498 (ALIILSITNMLGFFFTFLVPE) traverse the membrane as a helical segment. The Cytoplasmic portion of the chain corresponds to 499 to 555 (TMGRSLEEISGEDGNTGAGGGGAPAAANAGVGVSASDVSRDEKFPASSTEWQTSMHA). Residues 506–555 (EISGEDGNTGAGGGGAPAAANAGVGVSASDVSRDEKFPASSTEWQTSMHA) form a disordered region. A compositionally biased stretch (gly residues) spans 512–521 (GNTGAGGGGA). Residues 522–535 (PAAANAGVGVSASD) show a composition bias toward low complexity. Residues 544-555 (ASSTEWQTSMHA) are compositionally biased toward polar residues.

The protein belongs to the major facilitator superfamily. Phosphate:H(+) symporter (TC 2.A.1.9) family.

It is found in the membrane. In terms of biological role, symbiosis-specific regulated inorganic phosphate (Pi) transporter. Probably involved in symbiosis-mediated Pi uptake in roots colonized by myccorhizal fungi. The polypeptide is Inorganic phosphate transporter 1-11 (PHT1-11) (Oryza sativa subsp. japonica (Rice)).